The primary structure comprises 407 residues: Probable NADPH dehydrogenase (407 aa).

Residues threonine 49 and glutamine 124 each coordinate FMN. Tyrosine 206 serves as the catalytic Proton donor. Residues arginine 254 and arginine 357 each contribute to the FMN site.

The protein belongs to the NADH:flavin oxidoreductase/NADH oxidase family. Requires FMN as cofactor.

The enzyme catalyses A + NADPH + H(+) = AH2 + NADP(+). Oxidoreductase that binds mammalian estrogens with high affinity. The polypeptide is Probable NADPH dehydrogenase (Candida albicans (strain SC5314 / ATCC MYA-2876) (Yeast)).